We begin with the raw amino-acid sequence, 210 residues long: Large ribosomal subunit protein bL25 (210 aa).

The interval 1–23 (MSDIGTLSAKGRDRAGKGAARAT) is disordered.

Belongs to the bacterial ribosomal protein bL25 family. CTC subfamily. As to quaternary structure, part of the 50S ribosomal subunit; part of the 5S rRNA/L5/L18/L25 subcomplex. Contacts the 5S rRNA. Binds to the 5S rRNA independently of L5 and L18.

In terms of biological role, this is one of the proteins that binds to the 5S RNA in the ribosome where it forms part of the central protuberance. The polypeptide is Large ribosomal subunit protein bL25 (Rhodospirillum rubrum (strain ATCC 11170 / ATH 1.1.1 / DSM 467 / LMG 4362 / NCIMB 8255 / S1)).